A 1124-amino-acid chain; its full sequence is PAN2-PAN3 deadenylation complex catalytic subunit PAN2 (1124 aa).

WD repeat units follow at residues 19–58 (IDNS…IPMP), 118–157 (PGFN…TTSF), 158–195 (NHTG…TVKS), and 309–348 (SSNT…SKNF). A linker region spans residues 351–484 (FPSYLEQPDF…EYKLSNKFEV (134 aa)). The USP domain occupies 484–861 (VPNCYSNLKI…KPIIVMYQLA (378 aa)). Residues 917–1091 (IAIDAEFVAL…EDANTALLLY (175 aa)) form the Exonuclease domain. A divalent metal cation-binding residues include Asp-920, Glu-922, Asp-1030, and Asp-1083.

Belongs to the peptidase C19 family. PAN2 subfamily. In terms of assembly, forms a heterotrimer with an asymmetric homodimer of the regulatory subunit PAN3 to form the poly(A)-nuclease (PAN) deadenylation complex. A divalent metal cation is required as a cofactor.

The protein localises to the cytoplasm. It catalyses the reaction Exonucleolytic cleavage of poly(A) to 5'-AMP.. Its activity is regulated as follows. Positively regulated by the regulatory subunit PAN3. Catalytic subunit of the poly(A)-nuclease (PAN) deadenylation complex, one of two cytoplasmic mRNA deadenylases involved in mRNA turnover. PAN specifically shortens poly(A) tails of RNA and the activity is stimulated by poly(A)-binding protein PAB1. PAN deadenylation is followed by rapid degradation of the shortened mRNA tails by the CCR4-NOT complex. Deadenylated mRNAs are then degraded by two alternative mechanisms, namely exosome-mediated 3'-5' exonucleolytic degradation, or deadenylation-dependent mRNA decaping and subsequent 5'-3' exonucleolytic degradation by XRN1. May also be involved in post-transcriptional maturation of mRNA poly(A) tails. This Debaryomyces hansenii (strain ATCC 36239 / CBS 767 / BCRC 21394 / JCM 1990 / NBRC 0083 / IGC 2968) (Yeast) protein is PAN2-PAN3 deadenylation complex catalytic subunit PAN2.